We begin with the raw amino-acid sequence, 460 residues long: Mitochondrial distribution and morphology protein 10 (460 aa).

This sequence belongs to the MDM10 family. Component of the ER-mitochondria encounter structure (ERMES) or MDM complex, composed of MMM1, MDM10, MDM12 and MDM34. Associates with the mitochondrial outer membrane sorting assembly machinery SAM(core) complex.

It localises to the mitochondrion outer membrane. Component of the ERMES/MDM complex, which serves as a molecular tether to connect the endoplasmic reticulum and mitochondria. Components of this complex are involved in the control of mitochondrial shape and protein biogenesis and may function in phospholipid exchange. MDM10 is involved in the late assembly steps of the general translocase of the mitochondrial outer membrane (TOM complex). Functions in the TOM40-specific route of the assembly of outer membrane beta-barrel proteins, including the association of TOM40 with the receptor TOM22 and small TOM proteins. Can associate with the SAM(core) complex as well as the MDM12-MMM1 complex, both involved in late steps of the major beta-barrel assembly pathway, that is responsible for biogenesis of all outer membrane beta-barrel proteins. May act as a switch that shuttles between both complexes and channels precursor proteins into the TOM40-specific pathway. Plays a role in mitochondrial morphology and in the inheritance of mitochondria. The protein is Mitochondrial distribution and morphology protein 10 of Candida glabrata (strain ATCC 2001 / BCRC 20586 / JCM 3761 / NBRC 0622 / NRRL Y-65 / CBS 138) (Yeast).